Reading from the N-terminus, the 205-residue chain is Holliday junction branch migration complex subunit RuvA (205 aa).

The tract at residues 1 to 64 (MIGKLKGSIE…EDQLKLFGFV (64 aa)) is domain I. A domain II region spans residues 65-143 (SALEREWFNL…AFAGDASASI (79 aa)). The tract at residues 144–153 (GLKQELGEGV) is flexible linker. The interval 153 to 205 (VASAPVADAVSALTNLGYSRDQAANAVAAALKNGGEGGDSAKLIRLGLKELSR) is domain III.

The protein belongs to the RuvA family. As to quaternary structure, homotetramer. Forms an RuvA(8)-RuvB(12)-Holliday junction (HJ) complex. HJ DNA is sandwiched between 2 RuvA tetramers; dsDNA enters through RuvA and exits via RuvB. An RuvB hexamer assembles on each DNA strand where it exits the tetramer. Each RuvB hexamer is contacted by two RuvA subunits (via domain III) on 2 adjacent RuvB subunits; this complex drives branch migration. In the full resolvosome a probable DNA-RuvA(4)-RuvB(12)-RuvC(2) complex forms which resolves the HJ.

It localises to the cytoplasm. Its function is as follows. The RuvA-RuvB-RuvC complex processes Holliday junction (HJ) DNA during genetic recombination and DNA repair, while the RuvA-RuvB complex plays an important role in the rescue of blocked DNA replication forks via replication fork reversal (RFR). RuvA specifically binds to HJ cruciform DNA, conferring on it an open structure. The RuvB hexamer acts as an ATP-dependent pump, pulling dsDNA into and through the RuvAB complex. HJ branch migration allows RuvC to scan DNA until it finds its consensus sequence, where it cleaves and resolves the cruciform DNA. The protein is Holliday junction branch migration complex subunit RuvA of Agrobacterium fabrum (strain C58 / ATCC 33970) (Agrobacterium tumefaciens (strain C58)).